The following is a 126-amino-acid chain: KH homology domain-containing protein 1B (126 aa).

A KH domain is found at 19–78; it reads PLVFDMEEDQEDYIFGPDDEYLHTLEVHSNTLIQLERWFSPTGQTRVTVVGPLKARLWVM.

This sequence belongs to the KHDC1 family.

This Mus musculus (Mouse) protein is KH homology domain-containing protein 1B (Khdc1b).